We begin with the raw amino-acid sequence, 38 residues long: Large ribosomal subunit protein bL36 (38 aa).

It belongs to the bacterial ribosomal protein bL36 family.

The protein is Large ribosomal subunit protein bL36 of Saccharophagus degradans (strain 2-40 / ATCC 43961 / DSM 17024).